The following is a 124-amino-acid chain: MNKVKCYVLFTALLSSLCAYGAPQSITELCSEYRNTQIYTINDKILSYTESMAGKREMVIITFKSGATFQVEVPGSQHIDSQKKAIERMKDTLRITYLTETKIDKLCVWNNKTPNSIAAISMEN.

A signal peptide spans 1-21 (MNKVKCYVLFTALLSSLCAYG). Cysteines 30 and 107 form a disulfide.

Heterohexamer of one A chain and of five B chains.

In terms of biological role, the biological activity of the toxin is produced by the A chain, which activates intracellular adenyl cyclase. The protein is Heat-labile enterotoxin B chain (eltB) of Escherichia coli O78:H11 (strain H10407 / ETEC).